The chain runs to 407 residues: Biotin synthase (407 aa).

The region spanning Trp47–Arg277 is the Radical SAM core domain. Positions 65, 69, and 72 each coordinate [4Fe-4S] cluster. Positions 109, 142, 202, and 272 each coordinate [2Fe-2S] cluster. The tract at residues Gly368–Ala407 is disordered. Residues Ala373–Arg382 are compositionally biased toward low complexity.

It belongs to the radical SAM superfamily. Biotin synthase family. As to quaternary structure, homodimer. [4Fe-4S] cluster serves as cofactor. The cofactor is [2Fe-2S] cluster.

It carries out the reaction (4R,5S)-dethiobiotin + (sulfur carrier)-SH + 2 reduced [2Fe-2S]-[ferredoxin] + 2 S-adenosyl-L-methionine = (sulfur carrier)-H + biotin + 2 5'-deoxyadenosine + 2 L-methionine + 2 oxidized [2Fe-2S]-[ferredoxin]. It functions in the pathway cofactor biosynthesis; biotin biosynthesis; biotin from 7,8-diaminononanoate: step 2/2. Its function is as follows. Catalyzes the conversion of dethiobiotin (DTB) to biotin by the insertion of a sulfur atom into dethiobiotin via a radical-based mechanism. This is Biotin synthase from Streptomyces coelicolor (strain ATCC BAA-471 / A3(2) / M145).